The sequence spans 102 residues: Phosphoribosyl-ATP pyrophosphatase (102 aa).

Belongs to the PRA-PH family.

It is found in the cytoplasm. It catalyses the reaction 1-(5-phospho-beta-D-ribosyl)-ATP + H2O = 1-(5-phospho-beta-D-ribosyl)-5'-AMP + diphosphate + H(+). Its pathway is amino-acid biosynthesis; L-histidine biosynthesis; L-histidine from 5-phospho-alpha-D-ribose 1-diphosphate: step 2/9. The protein is Phosphoribosyl-ATP pyrophosphatase of Ignicoccus hospitalis (strain KIN4/I / DSM 18386 / JCM 14125).